Here is an 852-residue protein sequence, read N- to C-terminus: Ubiquitin carboxyl-terminal hydrolase 4 (852 aa).

The Rhodanese domain maps to 172 to 296; that stretch reads ASGTVLLVDV…WSNAHPDFCV (125 aa). The tract at residues 369–393 is disordered; the sequence is RSSSSSSNINERPGSVPPQLSNGST. Positions 488 to 849 constitute a USP domain; it reads VGLVNCGNSC…NAYVLFYHRI (362 aa). Cysteine 497 acts as the Nucleophile in catalysis. Histidine 806 serves as the catalytic Proton acceptor.

It belongs to the peptidase C19 family.

The protein resides in the cytoplasm. It is found in the late endosome membrane. The enzyme catalyses Thiol-dependent hydrolysis of ester, thioester, amide, peptide and isopeptide bonds formed by the C-terminal Gly of ubiquitin (a 76-residue protein attached to proteins as an intracellular targeting signal).. Its activity is regulated as follows. RFU1 is an inhibitor of deubiquitination activity. Ubiquitin thioesterase that acts at the late endosome/prevacuolar compartment to recover ubiquitin from ubiquitinated membrane proteins en route to the vacuole. Also removes ubiquitin from soluble proteins targeted to proteasomes. Is essential to maintain a normal level of free ubiquitin. Required for promoting coordination of DNA replication and avoids DNA overreplication. This Eremothecium gossypii (strain ATCC 10895 / CBS 109.51 / FGSC 9923 / NRRL Y-1056) (Yeast) protein is Ubiquitin carboxyl-terminal hydrolase 4 (DOA4).